The chain runs to 550 residues: CTP synthase (550 aa).

The amidoligase domain stretch occupies residues 1–270 (MTKYVFVTGG…DRIICEELKL (270 aa)). Position 13 (Ser-13) interacts with CTP. Ser-13 contacts UTP. ATP contacts are provided by residues 14 to 19 (SLGKGI) and Asp-71. Asp-71 and Glu-144 together coordinate Mg(2+). CTP-binding positions include 151–153 (DIE), 191–196 (KTKPTQ), and Lys-227. Residues 191-196 (KTKPTQ) and Lys-227 contribute to the UTP site. The Glutamine amidotransferase type-1 domain maps to 295–547 (TIGMVGKYVD…VEAALANKQA (253 aa)). Gly-356 contributes to the L-glutamine binding site. The active-site Nucleophile; for glutamine hydrolysis is Cys-383. Residues 384–387 (LGMQ), Glu-407, and Arg-473 each bind L-glutamine. Residues His-520 and Glu-522 contribute to the active site.

It belongs to the CTP synthase family. In terms of assembly, homotetramer.

It carries out the reaction UTP + L-glutamine + ATP + H2O = CTP + L-glutamate + ADP + phosphate + 2 H(+). It catalyses the reaction L-glutamine + H2O = L-glutamate + NH4(+). The catalysed reaction is UTP + NH4(+) + ATP = CTP + ADP + phosphate + 2 H(+). It functions in the pathway pyrimidine metabolism; CTP biosynthesis via de novo pathway; CTP from UDP: step 2/2. With respect to regulation, allosterically activated by GTP, when glutamine is the substrate; GTP has no effect on the reaction when ammonia is the substrate. The allosteric effector GTP functions by stabilizing the protein conformation that binds the tetrahedral intermediate(s) formed during glutamine hydrolysis. Inhibited by the product CTP, via allosteric rather than competitive inhibition. Functionally, catalyzes the ATP-dependent amination of UTP to CTP with either L-glutamine or ammonia as the source of nitrogen. Regulates intracellular CTP levels through interactions with the four ribonucleotide triphosphates. In Burkholderia lata (strain ATCC 17760 / DSM 23089 / LMG 22485 / NCIMB 9086 / R18194 / 383), this protein is CTP synthase.